The primary structure comprises 487 residues: Serine/threonine-protein kinase 4 (487 aa).

An N-acetylmethionine modification is found at methionine 1. Threonine 3 is modified (phosphothreonine). The Protein kinase domain maps to 30-281 (FDVLEKLGEG…ATQLLQHPFV (252 aa)). Residues 36 to 44 (LGEGSYGSV) and lysine 59 contribute to the ATP site. The active-site Proton acceptor is the aspartate 149. Threonine 183 carries the phosphothreonine; by autocatalysis modification. Serine 265 bears the Phosphoserine mark. A coiled-coil region spans residues 290–310 (LRDLINEAMDVKLKRQESQQR). A compositionally biased stretch (basic and acidic residues) spans 303–312 (KRQESQQREV). A disordered region spans residues 303–332 (KRQESQQREVDQDDEENSEEDEMDSGTMVR). The span at 313–326 (DQDDEENSEEDEMD) shows a compositional bias: acidic residues. Position 320 is a phosphoserine (serine 320). Threonine 340 and threonine 367 each carry phosphothreonine. A Phosphothreonine; by PKB/AKT1 modification is found at threonine 387. Residues serine 410 and serine 414 each carry the phosphoserine modification. Tyrosine 433 carries the post-translational modification Phosphotyrosine. Residues 433-480 (YEFLKSWTVEDLQKRLLALDPMMEQEIEEIRQKYQSKRQPILDAIEAK) form the SARAH domain.

Belongs to the protein kinase superfamily. STE Ser/Thr protein kinase family. STE20 subfamily. In terms of assembly, homodimer; mediated via the coiled-coil region. Interacts with NORE1, which inhibits autoactivation. Interacts with and stabilizes SAV1. Interacts with RASSF1. Interacts with FOXO3. Interacts with RASSF2 (via SARAH domain). Interacts with AR, PKB/AKT1, TNNI3 and SIRT1. Interacts with DLG5 (via PDZ domain 3). Interacts with MARK3 and SCRIB in the presence of DLG5. Mg(2+) is required as a cofactor. Post-translationally, autophosphorylated on serine and threonine residues. Phosphorylation at Thr-387 by PKB/AKT1, leads to inhibition of its: kinase activity, nuclear translocation and autophosphorylation at Thr-183. It also diminishes its cleavage by caspases and its ability to phosphorylate FOXO3. Proteolytically cleaved by caspase-3 during apoptosis at Asp-326 and Asp-349 resulting in a 37 kDa or a 39 kDa subunit respectively. The 39 kDa subunit is further cleaved into the 37 kDa form. Proteolytic cleavage results in kinase activation and nuclear translocation of the truncated form (MST1/N). It is less likely that cleavage at Asp-349 is a prerequisite for activation as this site is not conserved in the murine ortholog.

It localises to the cytoplasm. It is found in the nucleus. It catalyses the reaction L-seryl-[protein] + ATP = O-phospho-L-seryl-[protein] + ADP + H(+). The catalysed reaction is L-threonyl-[protein] + ATP = O-phospho-L-threonyl-[protein] + ADP + H(+). Its activity is regulated as follows. Inhibited by the C-terminal non-catalytic region. Activated by caspase-cleavage. Full activation also requires homodimerization and autophosphorylation of Thr-183. Activated by RASSF1 which acts by preventing its dephosphorylation. Its function is as follows. Stress-activated, pro-apoptotic kinase which, following caspase-cleavage, enters the nucleus and induces chromatin condensation followed by internucleosomal DNA fragmentation. Key component of the Hippo signaling pathway which plays a pivotal role in organ size control and tumor suppression by restricting proliferation and promoting apoptosis. The core of this pathway is composed of a kinase cascade wherein STK3/MST2 and STK4/MST1, in complex with its regulatory protein SAV1, phosphorylates and activates LATS1/2 in complex with its regulatory protein MOB1, which in turn phosphorylates and inactivates YAP1 oncoprotein and WWTR1/TAZ. Phosphorylation of YAP1 by LATS2 inhibits its translocation into the nucleus to regulate cellular genes important for cell proliferation, cell death, and cell migration. STK3/MST2 and STK4/MST1 are required to repress proliferation of mature hepatocytes, to prevent activation of facultative adult liver stem cells (oval cells), and to inhibit tumor formation. Phosphorylates 'Ser-14' of histone H2B (H2BS14ph) during apoptosis. Phosphorylates FOXO3 upon oxidative stress, which results in its nuclear translocation and cell death initiation. Phosphorylates MOBKL1A, MOBKL1B and RASSF2. Phosphorylates TNNI3 (cardiac Tn-I) and alters its binding affinity to TNNC1 (cardiac Tn-C) and TNNT2 (cardiac Tn-T). Phosphorylates FOXO1 on 'Ser-212' and regulates its activation and stimulates transcription of PMAIP1 in a FOXO1-dependent manner. Phosphorylates SIRT1 and inhibits SIRT1-mediated p53/TP53 deacetylation, thereby promoting p53/TP53 dependent transcription and apoptosis upon DNA damage. Acts as an inhibitor of PKB/AKT1. Phosphorylates AR on 'Ser-650' and suppresses its activity by intersecting with PKB/AKT1 signaling and antagonizing formation of AR-chromatin complexes. This Papio anubis (Olive baboon) protein is Serine/threonine-protein kinase 4 (STK4).